The sequence spans 256 residues: Tetraspanin-32 (256 aa).

Transmembrane regions (helical) follow at residues 15–35 (LITN…VVVI), 61–81 (AFYV…LSTI), 90–110 (LMAA…QVAF), and 203–223 (CTSL…WFAI).

Belongs to the tetraspanin (TM4SF) family. Expressed exclusively in hematopoietic tissues. Expression detected in spleen, thymus, bone marrow and peripheral blood leukocytes but not in heart, brain, lung, liver, kidney or testis.

It is found in the membrane. The chain is Tetraspanin-32 (Tspan32) from Mus musculus (Mouse).